Reading from the N-terminus, the 142-residue chain is Cellulose/chitin binding protein BQ2027_MB2009 (142 aa).

The signal sequence occupies residues 1-37; that stretch reads MAGLNIYVRRWRTALHATVSALIVAILGLAITPVASA. The CBM2 domain occupies 38–142; sequence ATARATLSVT…CLLNGQYPCT (105 aa).

It localises to the secreted. The protein resides in the cell wall. The protein localises to the cell membrane. Carbohydrate binding protein that binds chitin and cellulose. Lacks enzymatic activity and does not hydrolyze chitin and cellulose. May interact with mycobacterial biofilms, which are rich in cellulose, and play a role in biofilm formation. Could also act as an adhesin, improving the initial attachment to host cells and aiding M.bovis during the initial stages of infection. Functionally, may act as a virulence factor that modulates host immune responses and contributes to host immune evasion. The polypeptide is Cellulose/chitin binding protein BQ2027_MB2009 (Mycobacterium bovis (strain ATCC BAA-935 / AF2122/97)).